Here is a 92-residue protein sequence, read N- to C-terminus: PqqA binding protein (92 aa).

It belongs to the PqqD family. In terms of assembly, monomer. Interacts with PqqE.

It participates in cofactor biosynthesis; pyrroloquinoline quinone biosynthesis. Functions as a PqqA binding protein and presents PqqA to PqqE, in the pyrroloquinoline quinone (PQQ) biosynthetic pathway. The protein is PqqA binding protein of Azotobacter vinelandii (strain DJ / ATCC BAA-1303).